A 650-amino-acid polypeptide reads, in one-letter code: Acetyl-coenzyme A synthetase (650 aa).

CoA-binding positions include 191–194 (RGGR), Thr-311, and Asn-335. ATP-binding positions include 387 to 389 (GEP), 411 to 416 (DTWWQT), Asp-501, and Arg-516. A CoA-binding site is contributed by Ser-524. Arg-527 lines the ATP pocket. Residues Val-538, His-540, and Ile-543 each contribute to the Mg(2+) site. Arg-585 contacts CoA. Position 610 is an N6-acetyllysine (Lys-610).

It belongs to the ATP-dependent AMP-binding enzyme family. The cofactor is Mg(2+). Acetylated. Deacetylation by the SIR2-homolog deacetylase activates the enzyme.

It catalyses the reaction acetate + ATP + CoA = acetyl-CoA + AMP + diphosphate. Functionally, catalyzes the conversion of acetate into acetyl-CoA (AcCoA), an essential intermediate at the junction of anabolic and catabolic pathways. AcsA undergoes a two-step reaction. In the first half reaction, AcsA combines acetate with ATP to form acetyl-adenylate (AcAMP) intermediate. In the second half reaction, it can then transfer the acetyl group from AcAMP to the sulfhydryl group of CoA, forming the product AcCoA. The chain is Acetyl-coenzyme A synthetase from Vibrio vulnificus (strain CMCP6).